The primary structure comprises 174 residues: Heat shock protein 22 (174 aa).

One can recognise a sHSP domain in the interval 44–154 (QIARWQEQEF…TLKEREVTIE (111 aa)). Thr-152 carries the post-translational modification Phosphothreonine. A disordered region spans residues 152 to 174 (TIEQTGEPAKKSAEEPNDKAASQ). Positions 159–174 (PAKKSAEEPNDKAASQ) are enriched in basic and acidic residues.

This sequence belongs to the small heat shock protein (HSP20) family.

The chain is Heat shock protein 22 (Hsp22) from Drosophila melanogaster (Fruit fly).